The sequence spans 378 residues: Myoglobin (378 aa).

Residue His-332 participates in heme binding.

Belongs to the indoleamine 2,3-dioxygenase family. As to quaternary structure, homodimer. Heme is required as a cofactor.

Serves a reserve supply of oxygen and facilitates the movement of oxygen within muscles. The polypeptide is Myoglobin (Haliotis madaka (Giant abalone)).